We begin with the raw amino-acid sequence, 187 residues long: Adenine phosphoribosyltransferase (187 aa).

It belongs to the purine/pyrimidine phosphoribosyltransferase family. In terms of assembly, homodimer.

The protein localises to the cytoplasm. It carries out the reaction AMP + diphosphate = 5-phospho-alpha-D-ribose 1-diphosphate + adenine. The protein operates within purine metabolism; AMP biosynthesis via salvage pathway; AMP from adenine: step 1/1. Catalyzes a salvage reaction resulting in the formation of AMP, that is energically less costly than de novo synthesis. The sequence is that of Adenine phosphoribosyltransferase from Yersinia pseudotuberculosis serotype O:3 (strain YPIII).